The following is a 308-amino-acid chain: D-alanine--D-alanine ligase (308 aa).

An ATP-grasp domain is found at 102-302 (KHVAKAAGIP…FGEFLRWMVE (201 aa)). 128–183 (PMKPPYVVKPVREGSSFGVVIVKEDQSHPPQVITSSDWRYGDRIMVERYVAGREFT) contributes to the ATP binding site. Residues Asp-252, Glu-269, and Asn-271 each coordinate Mg(2+).

Belongs to the D-alanine--D-alanine ligase family. Requires Mg(2+) as cofactor. It depends on Mn(2+) as a cofactor.

The protein localises to the cytoplasm. It catalyses the reaction 2 D-alanine + ATP = D-alanyl-D-alanine + ADP + phosphate + H(+). The protein operates within cell wall biogenesis; peptidoglycan biosynthesis. Cell wall formation. This chain is D-alanine--D-alanine ligase, found in Sinorhizobium medicae (strain WSM419) (Ensifer medicae).